A 377-amino-acid polypeptide reads, in one-letter code: N-acetyldiaminopimelate deacetylase (377 aa).

The active site involves D69. E128 (proton acceptor) is an active-site residue.

This sequence belongs to the peptidase M20A family. N-acetyldiaminopimelate deacetylase subfamily.

The catalysed reaction is N-acetyl-(2S,6S)-2,6-diaminopimelate + H2O = (2S,6S)-2,6-diaminopimelate + acetate. The protein operates within amino-acid biosynthesis; L-lysine biosynthesis via DAP pathway; LL-2,6-diaminopimelate from (S)-tetrahydrodipicolinate (acetylase route): step 3/3. In terms of biological role, catalyzes the conversion of N-acetyl-diaminopimelate to diaminopimelate and acetate. This chain is N-acetyldiaminopimelate deacetylase, found in Brevibacillus brevis (strain 47 / JCM 6285 / NBRC 100599).